Here is a 354-residue protein sequence, read N- to C-terminus: S-adenosylmethionine:tRNA ribosyltransferase-isomerase (354 aa).

This sequence belongs to the QueA family. In terms of assembly, monomer.

It localises to the cytoplasm. The catalysed reaction is 7-aminomethyl-7-carbaguanosine(34) in tRNA + S-adenosyl-L-methionine = epoxyqueuosine(34) in tRNA + adenine + L-methionine + 2 H(+). It participates in tRNA modification; tRNA-queuosine biosynthesis. In terms of biological role, transfers and isomerizes the ribose moiety from AdoMet to the 7-aminomethyl group of 7-deazaguanine (preQ1-tRNA) to give epoxyqueuosine (oQ-tRNA). The sequence is that of S-adenosylmethionine:tRNA ribosyltransferase-isomerase from Salmonella heidelberg (strain SL476).